A 301-amino-acid chain; its full sequence is Golgi to ER traffic protein 2 (301 aa).

The Cytoplasmic segment spans residues 1–167 (MSEPVVDTAE…LEYNTYNQKL (167 aa)). Residues 42–55 (SQGSSVKTSGVKSV) are compositionally biased toward low complexity. The tract at residues 42 to 93 (SQGSSVKTSGVKSVLDQEKEATSSHDDDPEIQDITEITTPPPRTPPIGEDAP) is disordered. Positions 56–67 (LDQEKEATSSHD) are enriched in basic and acidic residues. A helical membrane pass occupies residues 168 to 188 (WKFRFLLVRVLVTLFNFFYHY). Residues 189 to 214 (TSISDFHASNYAYVRDLSSEEYPVRD) are Lumenal-facing. The chain crosses the membrane as a helical span at residues 215–234 (FFTWFATSEVVLVAAYYSVF). Residues 235–278 (HSLGLFHAANQNSIILKVMSMGSMILPQLESYKPLVARFLGYYE) lie on the Cytoplasmic side of the membrane. Residues 279–299 (LLGIVLGGLSLVIVLFGLLSF) form a helical membrane-spanning segment. Topologically, residues 300–301 (AN) are lumenal.

Belongs to the GET2 family. Component of the Golgi to ER traffic (GET) complex, which is composed of GET1, GET2 and GET3. Within the complex, GET1 and GET2 form a heterotetramer which is stabilized by phosphatidylinositol binding and which binds to the GET3 homodimer.

It localises to the endoplasmic reticulum membrane. It is found in the golgi apparatus membrane. Required for the post-translational delivery of tail-anchored (TA) proteins to the endoplasmic reticulum. Together with GET1, acts as a membrane receptor for soluble GET3, which recognizes and selectively binds the transmembrane domain of TA proteins in the cytosol. The GET complex cooperates with the HDEL receptor ERD2 to mediate the ATP-dependent retrieval of resident ER proteins that contain a C-terminal H-D-E-L retention signal from the Golgi to the ER. The sequence is that of Golgi to ER traffic protein 2 from Candida dubliniensis (strain CD36 / ATCC MYA-646 / CBS 7987 / NCPF 3949 / NRRL Y-17841) (Yeast).